Here is a 139-residue protein sequence, read N- to C-terminus: Histone H2B (139 aa).

Residues 1-10 are compositionally biased toward basic and acidic residues; it reads MAPKVAEKKP. Positions 1–47 are disordered; the sequence is MAPKVAEKKPSLAGKAPAGKAPAEKKEAGKKTTTATGEKKKRTKARK. N6-acetyllysine; alternate occurs at positions 8 and 9. Glycyl lysine isopeptide (Lys-Gly) (interchain with G-Cter in SUMO); alternate cross-links involve residues Lys-8 and Lys-9. Lys-15 is modified (N6-acetyllysine). Residue Lys-25 is modified to N6-acetyllysine; alternate. Lys-25 participates in a covalent cross-link: Glycyl lysine isopeptide (Lys-Gly) (interchain with G-Cter in SUMO); alternate. Residue Lys-26 forms a Glycyl lysine isopeptide (Lys-Gly) (interchain with G-Cter in SUMO) linkage. Lys-133 is covalently cross-linked (Glycyl lysine isopeptide (Lys-Gly) (interchain with G-Cter in ubiquitin)).

The protein belongs to the histone H2B family. As to quaternary structure, the nucleosome is a histone octamer containing two molecules each of H2A, H2B, H3 and H4 assembled in one H3-H4 heterotetramer and two H2A-H2B heterodimers. The octamer wraps approximately 147 bp of DNA. In terms of processing, monoubiquitinated by the UBC2-BRE1 complex to form H2BK123ub1. H2BK123ub1 gives a specific tag for epigenetic transcriptional activation and is also prerequisite for H3K4me and H3K79me formation. H2BK123ub1 also modulates the formation of double-strand breaks during meiosis and is a prerequisite for DNA-damage checkpoint activation. Acetylated by GCN5 to form H2BK11ac and H2BK16ac. H2BK16ac can also be formed by ESA1. Acetylation of N-terminal lysines and particularly formation of H2BK11acK16ac has a positive effect on transcription. Post-translationally, sumoylation to form H2BK6su or H2BK7su, and probably also H2BK16su or H2BK17su, occurs preferentially near the telomeres and represses gene transcription.

The protein resides in the nucleus. Its subcellular location is the chromosome. Functionally, core component of nucleosome. Nucleosomes wrap and compact DNA into chromatin, limiting DNA accessibility to the cellular machineries which require DNA as a template. Histones thereby play a central role in transcription regulation, DNA repair, DNA replication and chromosomal stability. DNA accessibility is regulated via a complex set of post-translational modifications of histones, also called histone code, and nucleosome remodeling. The sequence is that of Histone H2B (HTB1) from Yarrowia lipolytica (strain CLIB 122 / E 150) (Yeast).